The primary structure comprises 417 residues: MSSLNKLAIDQLNLAGKRVLIRVDFNVPLKDGKITNNQRIAAAVPTIQHALSNGAKSVVLMSHLGRPDGRRQDKYTLKPVAEELKALLKKDVLFLDDCVGSEVEAACADPAPGSVILLENLRYHLEEEGKGVDASGAKVKADSAAVKKFRESLTKLGDIYVNDAFGTAHRAHSSMVGVEHSQRASGFLLKNELSYFSKALDNPARPFLAILGGAKVADKIQLIKNLLDKVNEMIIGGGMAYTFLKVAQGVKIGNSLYDEEGAKIVNELLEAAKAKGVQIHLPVDFVIADKFAEDATSKTVTAEEGVPDGHMGLDVGPESSKIFAAAIQRAKTIVWNGPAGVFEFDKFATGTKSLMDEVVKATAAGAITIIGGGDTATAAKKYNTEDKVSHVSTGGGASLELLEGKVLPGVDALSPAQ.

The (2R)-3-phosphoglycerate site is built by V23, D24, F25, N26, Q38, R39, S62, H63, G65, R66, L121, R122, H169, and R170. G213 is a binding site for ADP. G213 lines the CDP pocket. Residues A214 and K215 each contribute to the AMP site. A214 contacts ATP. A214 lines the Mg(2+) pocket. The Mg(2+) site is built by A217 and D218. D218 is a binding site for CDP. Residue K219 participates in AMP binding. Residue K219 coordinates ATP. Residue G237 participates in ADP binding. G237 is a binding site for CDP. Residues G238 and G312 each coordinate AMP. ATP contacts are provided by G238 and G312. 3 residues coordinate CDP: G337, A339, and F342. F342 is an ADP binding site. AMP is bound at residue E343. Residues E343, D374, and T375 each coordinate ATP. D374 provides a ligand contact to Mg(2+).

The protein belongs to the phosphoglycerate kinase family. In terms of assembly, monomer. Mg(2+) serves as cofactor.

The protein resides in the cytoplasm. The catalysed reaction is (2R)-3-phosphoglycerate + ATP = (2R)-3-phospho-glyceroyl phosphate + ADP. It participates in carbohydrate degradation; glycolysis; pyruvate from D-glyceraldehyde 3-phosphate: step 2/5. This is Probable phosphoglycerate kinase (pgk-1) from Caenorhabditis elegans.